The primary structure comprises 210 residues: Two-component response regulator ORR7 (210 aa).

Residues 53 to 92 (VVPLHDNASAEDDDDDEEDDDEDDDDDDDEDDEEEAAPPY) form a disordered region. The segment covering 61-88 (SAEDDDDDEEDDDEDDDDDDDEDDEEEA) has biased composition (acidic residues). The region spanning 92–205 (YVMAVDDSSV…VRPADISRIT (114 aa)) is the Response regulatory domain. Aspartate 142 carries the 4-aspartylphosphate modification.

This sequence belongs to the ARR family. Type-A subfamily. Post-translationally, two-component system major event consists of a His-to-Asp phosphorelay between a sensor histidine kinase (HK) and a response regulator (RR). In plants, the His-to-Asp phosphorelay involves an additional intermediate named Histidine-containing phosphotransfer protein (HPt). This multistep phosphorelay consists of a His-Asp-His-Asp sequential transfer of a phosphate group between first a His and an Asp of the HK protein, followed by the transfer to a conserved His of the HPt protein and finally the transfer to an Asp in the receiver domain of the RR protein.

Functionally, functions as a response regulator involved in His-to-Asp phosphorelay signal transduction system. Phosphorylation of the Asp residue in the receiver domain activates the ability of the protein to promote the transcription of target genes. Type-A response regulators seem to act as negative regulators of the cytokinin signaling. In Oryza sativa subsp. japonica (Rice), this protein is Two-component response regulator ORR7.